Reading from the N-terminus, the 283-residue chain is Phosphatidylserine decarboxylase proenzyme (283 aa).

Residues Asp-96, His-152, and Ser-250 each act as charge relay system; for autoendoproteolytic cleavage activity in the active site. Residue Ser-250 is the Schiff-base intermediate with substrate; via pyruvic acid; for decarboxylase activity of the active site. Ser-250 is modified (pyruvic acid (Ser); by autocatalysis).

It belongs to the phosphatidylserine decarboxylase family. PSD-B subfamily. Prokaryotic type I sub-subfamily. As to quaternary structure, heterodimer of a large membrane-associated beta subunit and a small pyruvoyl-containing alpha subunit. The cofactor is pyruvate. In terms of processing, is synthesized initially as an inactive proenzyme. Formation of the active enzyme involves a self-maturation process in which the active site pyruvoyl group is generated from an internal serine residue via an autocatalytic post-translational modification. Two non-identical subunits are generated from the proenzyme in this reaction, and the pyruvate is formed at the N-terminus of the alpha chain, which is derived from the carboxyl end of the proenzyme. The autoendoproteolytic cleavage occurs by a canonical serine protease mechanism, in which the side chain hydroxyl group of the serine supplies its oxygen atom to form the C-terminus of the beta chain, while the remainder of the serine residue undergoes an oxidative deamination to produce ammonia and the pyruvoyl prosthetic group on the alpha chain. During this reaction, the Ser that is part of the protease active site of the proenzyme becomes the pyruvoyl prosthetic group, which constitutes an essential element of the active site of the mature decarboxylase.

The protein resides in the cell membrane. The catalysed reaction is a 1,2-diacyl-sn-glycero-3-phospho-L-serine + H(+) = a 1,2-diacyl-sn-glycero-3-phosphoethanolamine + CO2. The protein operates within phospholipid metabolism; phosphatidylethanolamine biosynthesis; phosphatidylethanolamine from CDP-diacylglycerol: step 2/2. In terms of biological role, catalyzes the formation of phosphatidylethanolamine (PtdEtn) from phosphatidylserine (PtdSer). This is Phosphatidylserine decarboxylase proenzyme from Acinetobacter baumannii (strain ACICU).